Consider the following 263-residue polypeptide: N-acetylgalactosamine permease IID component (263 aa).

A PTS EIID domain is found at 3–263 (SEISKKDITR…SIVCSAFGIL (261 aa)). 6 helical membrane passes run 61–81 (LEFI…LISM), 98–118 (LFGP…LPIM), 131–151 (LLGP…RVGW), 178–198 (TILG…INVV), 215–235 (FFDK…MYYF), and 243–263 (PVLL…FGIL).

It localises to the cell inner membrane. Its function is as follows. The phosphoenolpyruvate-dependent sugar phosphotransferase system (PTS), a major carbohydrate active -transport system, catalyzes the phosphorylation of incoming sugar substrates concomitant with their translocation across the cell membrane. This system is involved in N-acetylgalactosamine transport. The protein is N-acetylgalactosamine permease IID component (agaD) of Escherichia coli (strain K12).